Here is a 344-residue protein sequence, read N- to C-terminus: 2,3,4,5-tetrahydropyridine-2,6-dicarboxylate N-succinyltransferase (344 aa).

Glu205 provides a ligand contact to Mg(2+). The active-site Acyl-anhydride intermediate is the Glu221. Succinyl-CoA is bound by residues Arg223, Gly238, Ser241, Ala264, 279 to 280, Gly287, Lys304, and 317 to 320; these read EA and RRNS.

It belongs to the type 2 tetrahydrodipicolinate N-succinyltransferase family. As to quaternary structure, homotrimer.

Its subcellular location is the cytoplasm. The catalysed reaction is (S)-2,3,4,5-tetrahydrodipicolinate + succinyl-CoA + H2O = (S)-2-succinylamino-6-oxoheptanedioate + CoA. It functions in the pathway amino-acid biosynthesis; L-lysine biosynthesis via DAP pathway; LL-2,6-diaminopimelate from (S)-tetrahydrodipicolinate (succinylase route): step 1/3. In terms of biological role, catalyzes the conversion of the cyclic tetrahydrodipicolinate (THDP) into the acyclic N-succinyl-L-2-amino-6-oxopimelate using succinyl-CoA. This is 2,3,4,5-tetrahydropyridine-2,6-dicarboxylate N-succinyltransferase from Pseudomonas putida (strain ATCC 47054 / DSM 6125 / CFBP 8728 / NCIMB 11950 / KT2440).